We begin with the raw amino-acid sequence, 537 residues long: Tyrosine-protein kinase Fyn (537 aa).

Residue G2 is the site of N-myristoyl glycine attachment. Residues C3 and C6 are each lipidated (S-palmitoyl cysteine). Residue T12 is modified to Phosphothreonine; by PKC. In terms of domain architecture, SH3 spans 82-143; that stretch reads TGVTLFVALY…PSNYVAPVDS (62 aa). Positions 149-246 constitute an SH2 domain; the sequence is WYFGKLGRKD…GLCCRLVVPC (98 aa). The region spanning 271-524 is the Protein kinase domain; that stretch reads LQLIKRLGNG…YLQGFLEDYF (254 aa). ATP-binding positions include 277 to 285 and K299; that span reads LGNGQFGEV. D390 acts as the Proton acceptor in catalysis. Y420 is subject to Phosphotyrosine; by autocatalysis. Residue Y531 is modified to Phosphotyrosine.

It belongs to the protein kinase superfamily. Tyr protein kinase family. SRC subfamily. Associates through its SH3 domain, to the p85 subunit of phosphatidylinositol 3-kinase. Mn(2+) is required as a cofactor.

The catalysed reaction is L-tyrosyl-[protein] + ATP = O-phospho-L-tyrosyl-[protein] + ADP + H(+). Its activity is regulated as follows. Inhibited by phosphorylation of Tyr-531 by leukocyte common antigen and activated by dephosphorylation of this site. Its function is as follows. Tyrosine-protein kinase implicated in the control of cell growth. Plays a role in the regulation of intracellular calcium levels. Required in brain development and mature brain function with important roles in the regulation of axon growth, axon guidance, and neurite extension. Blocks axon outgrowth and attraction induced by ntn1 by phosphorylating its receptor ddc. This is Tyrosine-protein kinase Fyn (fyn) from Xenopus laevis (African clawed frog).